Here is a 963-residue protein sequence, read N- to C-terminus: Iron-responsive element-binding protein 2 (963 aa).

Residues Cys512, Cys578, and Cys581 each coordinate [4Fe-4S] cluster.

It belongs to the aconitase/IPM isomerase family. In terms of assembly, interacts with RBCK1 only in iron-rich conditions. Interacts (when associated with the 4Fe-4S) with FBXL5. Interacts with CIAO1 and CIAO2A. It depends on [4Fe-4S] cluster as a cofactor. In terms of processing, ubiquitinated and degraded by the proteasome in presence of high level of iron and oxygen. Ubiquitinated by a SCF complex containing FBXL5. Upon iron and oxygen depletion FBXL5 is degraded, preventing ubiquitination and allowing its RNA-binding activity.

It is found in the cytoplasm. In terms of biological role, RNA-binding protein that binds to iron-responsive elements (IRES), which are stem-loop structures found in the 5'-UTR of ferritin, and delta aminolevulinic acid synthase mRNAs, and in the 3'-UTR of transferrin receptor mRNA. Binding to the IRE element in ferritin results in the repression of its mRNA translation. Binding of the protein to the transferrin receptor mRNA inhibits the degradation of this otherwise rapidly degraded mRNA. The chain is Iron-responsive element-binding protein 2 (Ireb2) from Mus musculus (Mouse).